Reading from the N-terminus, the 208-residue chain is Large ribosomal subunit protein uL3 (208 aa).

Position 149 is an N5-methylglutamine (Gln149).

The protein belongs to the universal ribosomal protein uL3 family. Part of the 50S ribosomal subunit. Forms a cluster with proteins L14 and L19. Methylated by PrmB.

In terms of biological role, one of the primary rRNA binding proteins, it binds directly near the 3'-end of the 23S rRNA, where it nucleates assembly of the 50S subunit. The protein is Large ribosomal subunit protein uL3 of Glaesserella parasuis serovar 5 (strain SH0165) (Haemophilus parasuis).